The chain runs to 281 residues: MSTRTVKVGGIDIANDRPFVLFGGMNVLESRDLALQVAESYVKVTQKLGIPYVFKASFDKANRSSINSYRGPGLDEGLRIFEEIKRTFNVPVITDIHEPHQAQPVAEVADIIQLPAFLSRQTDLVAAMARTGCPVNIKKAQFLAPQEMKHILSKCEEAGNDQLILCERGSSFGYNNLVVDMLGFGIMKQFGYPVFFDVTHSLQMPGGLSSSAGGRREQVVQLARSGMAVGLAGLFLEAHPDPDVAKCDGPCALRLSQLEPFLAQMKALDDMVKQFPNIDTA.

This sequence belongs to the KdsA family.

It localises to the cytoplasm. The catalysed reaction is D-arabinose 5-phosphate + phosphoenolpyruvate + H2O = 3-deoxy-alpha-D-manno-2-octulosonate-8-phosphate + phosphate. It participates in carbohydrate biosynthesis; 3-deoxy-D-manno-octulosonate biosynthesis; 3-deoxy-D-manno-octulosonate from D-ribulose 5-phosphate: step 2/3. It functions in the pathway bacterial outer membrane biogenesis; lipopolysaccharide biosynthesis. The chain is 2-dehydro-3-deoxyphosphooctonate aldolase from Hahella chejuensis (strain KCTC 2396).